The following is a 116-amino-acid chain: MDKKASRLRRATRTRKKLQELGATRLVINRTPRHTYAQVITADAQVVASASTLEKEVRAQISNGGNKEAAQLIGKLVAERAVEKGISKISFDRSGFQYHGRVAALAEAAREAGLQF.

It belongs to the universal ribosomal protein uL18 family. As to quaternary structure, part of the 50S ribosomal subunit; part of the 5S rRNA/L5/L18/L25 subcomplex. Contacts the 5S and 23S rRNAs.

Its function is as follows. This is one of the proteins that bind and probably mediate the attachment of the 5S RNA into the large ribosomal subunit, where it forms part of the central protuberance. The sequence is that of Large ribosomal subunit protein uL18 from Psychromonas ingrahamii (strain DSM 17664 / CCUG 51855 / 37).